Consider the following 249-residue polypeptide: Tryptophan synthase alpha chain (249 aa).

Residues E43 and D54 each act as proton acceptor in the active site.

It belongs to the TrpA family. In terms of assembly, tetramer of two alpha and two beta chains.

It carries out the reaction (1S,2R)-1-C-(indol-3-yl)glycerol 3-phosphate + L-serine = D-glyceraldehyde 3-phosphate + L-tryptophan + H2O. The protein operates within amino-acid biosynthesis; L-tryptophan biosynthesis; L-tryptophan from chorismate: step 5/5. Its function is as follows. The alpha subunit is responsible for the aldol cleavage of indoleglycerol phosphate to indole and glyceraldehyde 3-phosphate. The chain is Tryptophan synthase alpha chain from Campylobacter jejuni subsp. jejuni serotype O:23/36 (strain 81-176).